Consider the following 554-residue polypeptide: Membrane protein insertase YidC (554 aa).

The next 5 membrane-spanning stretches (helical) occupy residues 7-24, 362-382, 436-456, 475-495, and 510-530; these read VLWVIFFMSAVMLYDNWQ, FVGNWGWAIVLLTVLIKAVFF, LPVVIQIPVFISLYWVLLASV, PFFILPVLMAVSMFVQTSLNP, and PIAFSVMFFFFPAGLVLYYVV.

Belongs to the OXA1/ALB3/YidC family. Type 1 subfamily. In terms of assembly, interacts with the Sec translocase complex via SecD. Specifically interacts with transmembrane segments of nascent integral membrane proteins during membrane integration.

The protein localises to the cell inner membrane. Required for the insertion and/or proper folding and/or complex formation of integral membrane proteins into the membrane. Involved in integration of membrane proteins that insert both dependently and independently of the Sec translocase complex, as well as at least some lipoproteins. Aids folding of multispanning membrane proteins. This is Membrane protein insertase YidC from Burkholderia ambifaria (strain MC40-6).